The following is a 37-amino-acid chain: Potassium channel toxin alpha-KTx 1.3 (37 aa).

Glutamine 1 carries the pyrrolidone carboxylic acid modification. Intrachain disulfides connect cysteine 7/cysteine 28, cysteine 13/cysteine 33, and cysteine 17/cysteine 35. Positions 26-33 (GKCMGKKC) are interaction with Ca(2+)-activated K(+) channels.

The protein belongs to the short scorpion toxin superfamily. Potassium channel inhibitor family. Alpha-KTx 01 subfamily. In terms of tissue distribution, expressed by the venom gland.

The protein localises to the secreted. Blocks selectively the high conductance calcium-activated (maxi-K) potassium channels (KCa1.1/KCNMA1). The polypeptide is Potassium channel toxin alpha-KTx 1.3 (Hottentotta tamulus (Eastern Indian scorpion)).